We begin with the raw amino-acid sequence, 189 residues long: Inner membrane-spanning protein YciB (189 aa).

The next 5 membrane-spanning stretches (helical) occupy residues 4 to 24 (FFEF…DIYI), 53 to 73 (ITFG…DDVF), 76 to 96 (WKVT…QFFY), 121 to 141 (MAWA…AFSL), and 149 to 169 (FKVF…GLYI).

Belongs to the YciB family.

It localises to the cell inner membrane. Functionally, plays a role in cell envelope biogenesis, maintenance of cell envelope integrity and membrane homeostasis. The protein is Inner membrane-spanning protein YciB of Psychromonas ingrahamii (strain DSM 17664 / CCUG 51855 / 37).